The following is a 388-amino-acid chain: GTPase Obg (388 aa).

The Obg domain occupies 1–159 (MKFVDEANIR…RSIKLELLLL (159 aa)). Residues 160-333 (ADVGLLGMPN…LSIKMLDYIR (174 aa)) enclose the OBG-type G domain. GTP-binding positions include 166–173 (GMPNAGKS), 191–195 (FTTLV), 213–216 (DIPG), 283–286 (NKTD), and 314–316 (SAY). Positions 173 and 193 each coordinate Mg(2+).

Belongs to the TRAFAC class OBG-HflX-like GTPase superfamily. OBG GTPase family. In terms of assembly, monomer. It depends on Mg(2+) as a cofactor.

The protein localises to the cytoplasm. Its function is as follows. An essential GTPase which binds GTP, GDP and possibly (p)ppGpp with moderate affinity, with high nucleotide exchange rates and a fairly low GTP hydrolysis rate. Plays a role in control of the cell cycle, stress response, ribosome biogenesis and in those bacteria that undergo differentiation, in morphogenesis control. The protein is GTPase Obg of Shewanella frigidimarina (strain NCIMB 400).